The primary structure comprises 157 residues: Phosphopantetheine adenylyltransferase (157 aa).

Thr10 serves as a coordination point for substrate. ATP contacts are provided by residues 10–11 (TF) and His18. 3 residues coordinate substrate: Lys42, Leu74, and Arg88. ATP-binding positions include 89–91 (GLR), Glu99, and 124–130 (NAFISSS).

Belongs to the bacterial CoaD family. In terms of assembly, homohexamer. Requires Mg(2+) as cofactor.

Its subcellular location is the cytoplasm. It catalyses the reaction (R)-4'-phosphopantetheine + ATP + H(+) = 3'-dephospho-CoA + diphosphate. The protein operates within cofactor biosynthesis; coenzyme A biosynthesis; CoA from (R)-pantothenate: step 4/5. Its activity is regulated as follows. Tightly binds to CoA, which is presumably a feedback inhibitor. Potently inhibited by D-amethopterin, which simultaneously occupies the 4'-phosphopantetheine- and ATP-binding sites; following treatment with D-amethopterin, H.pylori exhibits morphological characteristics associated with cell death, showing that D-amethopterin displays antimicrobial activity. Its function is as follows. Reversibly transfers an adenylyl group from ATP to 4'-phosphopantetheine, yielding dephospho-CoA (dPCoA) and pyrophosphate. This Helicobacter pylori (strain ATCC 700392 / 26695) (Campylobacter pylori) protein is Phosphopantetheine adenylyltransferase.